A 435-amino-acid polypeptide reads, in one-letter code: Xylose isomerase (435 aa).

Residues His-100 and Asp-103 contribute to the active site. Mg(2+) contacts are provided by Glu-231, Glu-267, His-270, Asp-295, Asp-306, Asp-308, and Asp-338.

It belongs to the xylose isomerase family. In terms of assembly, homotetramer. The cofactor is Mg(2+).

The protein localises to the cytoplasm. The catalysed reaction is alpha-D-xylose = alpha-D-xylulofuranose. This chain is Xylose isomerase, found in Brucella suis (strain ATCC 23445 / NCTC 10510).